A 708-amino-acid polypeptide reads, in one-letter code: E3 ubiquitin-protein ligase RNF169 (708 aa).

Composition is skewed to low complexity over residues 1–20 and 33–53; these read MAAAGPSTRASSAAAAAALS and AAKTGAPGPASGPSLLVLSPP. 3 disordered regions span residues 1 to 71, 96 to 169, and 195 to 262; these read MAAA…CAGC, ADAA…EPDF, and EEKL…MTQT. Ser-12 bears the Phosphoserine mark. The segment at 68–107 adopts an RING-type zinc-finger fold; the sequence is CAGCLEPPGEAAALPCGHSLCRGCAQRAADAAGPGCPRCR. The segment covering 132–147 has biased composition (basic and acidic residues); the sequence is CARRSQPERCRPRRDG. Residues 148–167 are compositionally biased toward low complexity; it reads GAAAAGPRPEQEPRAAPAEP. Residues 195-243 are compositionally biased toward basic and acidic residues; the sequence is EEKLQEEKPSEDQIHKLLPEDTETGKRKMDEQKKRDEPLVLKTNLERCP. The UMI motif signature appears at 205-213; it reads EDQIHKLLP. A phosphoserine mark is found at Ser-247 and Ser-249. Residue Lys-286 forms a Glycyl lysine isopeptide (Lys-Gly) (interchain with G-Cter in SUMO2) linkage. The residue at position 339 (Ser-339) is a Phosphoserine. Lys-362 is covalently cross-linked (Glycyl lysine isopeptide (Lys-Gly) (interchain with G-Cter in SUMO2)). Phosphoserine is present on residues Ser-368, Ser-403, and Ser-409. Thr-410 is modified (phosphothreonine). Ser-485 is modified (phosphoserine). Residues 491–555 are disordered; sequence SEYTGPTSAD…EQFEGLGSTP (65 aa). Residue Lys-511 forms a Glycyl lysine isopeptide (Lys-Gly) (interchain with G-Cter in SUMO2) linkage. Phosphothreonine is present on Thr-554. Ser-644 is subject to Phosphoserine. Positions 665 to 682 match the MIU motif motif; the sequence is QEEEDRQLALQLQRMFDN. Residues 689–701 carry the LR motif motif; sequence RRKGSVDQYLLRS. Ser-693 carries the post-translational modification Phosphoserine.

It belongs to the RNF169 family. In terms of assembly, interacts with DYRK1B. In terms of processing, phosphorylated by DYRK1A; phosphorylation increases RNF169 ability to block accumulation of TP53BP1 at the DSB sites.

It is found in the chromosome. The protein resides in the nucleus. The protein localises to the nucleoplasm. It carries out the reaction S-ubiquitinyl-[E2 ubiquitin-conjugating enzyme]-L-cysteine + [acceptor protein]-L-lysine = [E2 ubiquitin-conjugating enzyme]-L-cysteine + N(6)-ubiquitinyl-[acceptor protein]-L-lysine.. It participates in protein modification; protein ubiquitination. Probable E3 ubiquitin-protein ligase that acts as a regulator of double-strand breaks (DSBs) repair following DNA damage. Functions in a non-canonical fashion to harness RNF168-mediated protein recruitment to DSB-containing chromatin, thereby contributing to regulation of DSB repair pathway utilization. Once recruited to DSB repair sites by recognizing and binding ubiquitin catalyzed by RNF168, competes with TP53BP1 and BRCA1 for association with RNF168-modified chromatin, thereby favouring homologous recombination repair (HRR) and single-strand annealing (SSA) instead of non-homologous end joining (NHEJ) mediated by TP53BP1. E3 ubiquitin-protein ligase activity is not required for regulation of DSBs repair. The chain is E3 ubiquitin-protein ligase RNF169 (RNF169) from Homo sapiens (Human).